Here is a 2282-residue protein sequence, read N- to C-terminus: Protein Ycf2 (2282 aa).

1635 to 1642 (GSIGTGRS) contributes to the ATP binding site.

This sequence belongs to the Ycf2 family.

It localises to the plastid. Its subcellular location is the chloroplast stroma. Its function is as follows. Probable ATPase of unknown function. Its presence in a non-photosynthetic plant (Epifagus virginiana) and experiments in tobacco indicate that it has an essential function which is probably not related to photosynthesis. This chain is Protein Ycf2, found in Populus alba (White poplar).